Consider the following 212-residue polypeptide: Golgi SNAP receptor complex member 2 (212 aa).

M1 carries the N-acetylmethionine modification. The Cytoplasmic segment spans residues 1-190 (MEPLYQQTNK…LIEKRAFQDK (190 aa)). Positions 60–92 (LNRRQNAKLRVDQLKYDVQHLQTALRNFQHRRQ) form a coiled coil. The short motif at 118 to 120 (IPM) is the IxM motif; signal for cargo packaging into COPII-coated vesicles element. A helical; Anchor for type IV membrane protein membrane pass occupies residues 191–211 (YFMIGGMLLTCAVMFLVVQYL). T212 is a topological domain (vesicular).

Belongs to the GOSR2 family. As to quaternary structure, part of a unique SNARE complex composed of the Golgi SNAREs GOSR1, STX5 and YKT6. Interacts with BET1.

The protein resides in the golgi apparatus. The protein localises to the cis-Golgi network membrane. Its subcellular location is the golgi apparatus membrane. It is found in the endoplasmic reticulum membrane. In terms of biological role, involved in transport of proteins from the cis/medial-Golgi to the trans-Golgi network. The polypeptide is Golgi SNAP receptor complex member 2 (Gosr2) (Mus musculus (Mouse)).